The sequence spans 186 residues: Casparian strip membrane protein 1 (186 aa).

Residues methionine 1–serine 26 lie on the Cytoplasmic side of the membrane. A helical transmembrane segment spans residues valine 27–methionine 47. At glycine 48–arginine 74 the chain is on the extracellular side. The helical transmembrane segment at leucine 75–isoleucine 95 threads the bilayer. The Cytoplasmic segment spans residues leucine 96 to arginine 107. A helical membrane pass occupies residues valine 108 to alanine 128. Residues alanine 129–serine 161 are Extracellular-facing. The helical transmembrane segment at leucine 162–valine 182 threads the bilayer. Residues leucine 183–arginine 186 are Cytoplasmic-facing.

It belongs to the Casparian strip membrane proteins (CASP) family. As to quaternary structure, homodimer and heterodimers.

It is found in the cell membrane. Functionally, regulates membrane-cell wall junctions and localized cell wall deposition. Required for establishment of the Casparian strip membrane domain (CSD) and the subsequent formation of Casparian strips, a cell wall modification of the root endodermis that determines an apoplastic barrier between the intraorganismal apoplasm and the extraorganismal apoplasm and prevents lateral diffusion. The sequence is that of Casparian strip membrane protein 1 from Lotus japonicus (Lotus corniculatus var. japonicus).